Here is a 1375-residue protein sequence, read N- to C-terminus: Patatin-like phospholipase domain-containing protein 6 (1375 aa).

Residues 1-20 (MEAPLQTGMMGTSSHGLATN) are disordered. At 1-59 (MEAPLQTGMMGTSSHGLATNSSGAKVAERDGFQDVLAPGEGSAGRICGAQPVPFVPQVL) the chain is on the lumenal side. A compositionally biased stretch (polar residues) spans 9-20 (MMGTSSHGLATN). Residue Asn-20 is glycosylated (N-linked (GlcNAc...) asparagine). The chain crosses the membrane as a helical span at residues 60-80 (GVMIGAGVAVVVTAVLILLVV). Residues 81 to 1375 (RRLRVPKTPA…QEPPGSATDA (1295 aa)) are Cytoplasmic-facing. 195–322 (VLGHFEKPLF…VRVVQIIMVR (128 aa)) is an a nucleoside 3',5'-cyclic phosphate binding site. Disordered regions lie at residues 352-436 (FPSP…RSDF) and 449-472 (LQEE…PREQ). At Ser-354 the chain carries Phosphoserine. Residues 359–376 (TRTSPVRGSKRMVSTSAT) show a composition bias toward polar residues. A Phosphothreonine modification is found at Thr-361. Phosphoserine occurs at positions 362 and 372. Positions 384–398 (GRPPDPTGAPLPGPT) are enriched in pro residues. Ser-420 is subject to Phosphoserine. Thr-464 is subject to Phosphothreonine. A nucleoside 3',5'-cyclic phosphate-binding positions include 511–633 (ELAK…VAAR) and 629–749 (TVAA…LSQK). The region spanning 981 to 1147 (LVLGGGGARG…INNLPADIAR (167 aa)) is the PNPLA domain. The short motif at 985–990 (GGGARG) is the GXGXXG element. Positions 1012–1016 (GTSIG) match the GXSXG motif. The active-site Nucleophile is Ser-1014. The active-site Proton acceptor is the Asp-1134. The DGA/G motif lies at 1134–1136 (DGG). The tract at residues 1306–1375 (SYVSDGCADG…QEPPGSATDA (70 aa)) is disordered. Over residues 1313–1329 (ADGEESDCLTEYEEDAG) the composition is skewed to acidic residues.

Belongs to the NTE family. Post-translationally, glycosylated. As to expression, expressed in brain, placenta, kidney, neuron and skeletal muscle. Expressed in the developing eye, pituitary and brain.

It is found in the endoplasmic reticulum membrane. It catalyses the reaction a 1-acyl-sn-glycero-3-phosphocholine + H2O = sn-glycerol 3-phosphocholine + a fatty acid + H(+). The catalysed reaction is 1-(9Z-octadecenoyl)-sn-glycero-3-phosphocholine + H2O = sn-glycerol 3-phosphocholine + (9Z)-octadecenoate + H(+). The enzyme catalyses 1-hexadecanoylglycerol + H2O = glycerol + hexadecanoate + H(+). It carries out the reaction 2-hexadecanoylglycerol + H2O = glycerol + hexadecanoate + H(+). It catalyses the reaction 1-(9Z-octadecenoyl)-glycerol + H2O = glycerol + (9Z)-octadecenoate + H(+). The catalysed reaction is 2-(9Z-octadecenoyl)-glycerol + H2O = glycerol + (9Z)-octadecenoate + H(+). The enzyme catalyses 2-(5Z,8Z,11Z,14Z-eicosatetraenoyl)-glycerol + H2O = glycerol + (5Z,8Z,11Z,14Z)-eicosatetraenoate + H(+). It carries out the reaction 1-hexadecanoyl-sn-glycero-3-phosphate + H2O = sn-glycerol 3-phosphate + hexadecanoate + H(+). It catalyses the reaction 1-hexadecanoyl-sn-glycero-3-phosphocholine + H2O = sn-glycerol 3-phosphocholine + hexadecanoate + H(+). Inhibited by a series a OPs such as mipafox (MPX), phenyl saligenin phosphate (PSP), phenyl dipentyl phosphinate (PDPP), diisopropyl fluorophosphate and paraoxon. Functionally, phospholipase B that deacylates intracellular phosphatidylcholine (PtdCho), generating glycerophosphocholine (GroPtdCho). This deacylation occurs at both sn-2 and sn-1 positions of PtdCho. Catalyzes the hydrolysis of several naturally occurring membrane-associated lipids. Hydrolyzes lysophospholipids and monoacylglycerols, preferring the 1-acyl to the 2-acyl isomer. Does not catalyze hydrolysis of di- or triacylglycerols or fatty acid amides. The sequence is that of Patatin-like phospholipase domain-containing protein 6 from Homo sapiens (Human).